The following is a 696-amino-acid chain: DNA-directed RNA polymerase subunit beta' (696 aa).

Positions 76, 78, 94, and 97 each coordinate Zn(2+). Mg(2+) contacts are provided by Asp-496, Asp-498, and Asp-500.

Belongs to the RNA polymerase beta' chain family. RpoC1 subfamily. As to quaternary structure, in plastids the minimal PEP RNA polymerase catalytic core is composed of four subunits: alpha, beta, beta', and beta''. When a (nuclear-encoded) sigma factor is associated with the core the holoenzyme is formed, which can initiate transcription. The cofactor is Mg(2+). Zn(2+) serves as cofactor.

It is found in the plastid. The protein localises to the chloroplast. The catalysed reaction is RNA(n) + a ribonucleoside 5'-triphosphate = RNA(n+1) + diphosphate. Its function is as follows. DNA-dependent RNA polymerase catalyzes the transcription of DNA into RNA using the four ribonucleoside triphosphates as substrates. The sequence is that of DNA-directed RNA polymerase subunit beta' from Guizotia abyssinica (Niger).